The primary structure comprises 538 residues: MEGSANQLQPLSETQVVNSEGGCVWQVTDMNRLRRFLCFGSEGGTYYIKEQKLGLENAEALIRLIEDGRGCEVIQEIKSFSQEGRTAKQEPLLFALAVCSQCADINTKQAAFKAVPEVCRIPTHLFTFIQFKKDLKESMKCGMWGRALRKAVADWYNEKGGMAVALVVTKYKQRNGWSHKDLLRLSHLKPSSEGLAIVTKYITKGWKEVHEEYKEKALSVEAEKLLKYLEAVEKVKRTKDDLEVIHLIEEHQLVREHLLTNHLKSKEVWKALLQEMPLTALLRNLGKMTANSVLEPGNSEVSLICEKLSNEKLLKKARIHPFHVLIALETYRAGHGLRGKLKWIPDKDILQALDAAFYTTFKTVEPTGKRFLLAVDVSASMNQRALGSVLNASTVAAAMCMVVTRTEKESSVVAFACDMVPFPVTTDMTLQQVLTAMNKVPAGNTDCSLPMIWAQKTDTAADVFVVFTDNETFAGQVHPAVALREYRKKMDIPAKLIVCGMTSNGFTIADPDDRGMLDMCGFDTAALDVIRNFTLDVI.

Met-1 is subject to N-acetylmethionine. 2 positions are modified to phosphoserine: Ser-4 and Ser-19. The 354-residue stretch at 16-369 (VVNSEGGCVW…TFKTVEPTGK (354 aa)) folds into the TROVE domain. Residues 120 to 284 (RIPTHLFTFI…EMPLTALLRN (165 aa)) form an RNA-binding region. An N6-acetyllysine modification is found at Lys-224. Positions 361–538 (FKTVEPTGKR…VIRNFTLDVI (178 aa)) are VWFA-like domain. A divalent metal cation-binding residues include Ser-378, Ser-380, and Thr-445.

It belongs to the Ro 60 kDa family. In terms of assembly, identified in a IGF2BP1-dependent mRNP granule complex containing untranslated mRNAs. Found in a complex with PUF60 and Y5 RNA. Interacts with RAB11FIP5. As to expression, highest in brain, followed by lung, muscle, kidney and heart. Lower levels are found in testis, liver and spleen.

Its subcellular location is the cytoplasm. Its function is as follows. RNA-binding protein that binds to misfolded non-coding RNAs, pre-5S rRNA, and several small cytoplasmic RNA molecules known as Y RNAs. May play roles in cilia formation and/or maintenance. The polypeptide is RNA-binding protein Ro60 (Mus musculus (Mouse)).